Reading from the N-terminus, the 367-residue chain is DNA replication and repair protein RecF (367 aa).

Residue 30-37 (GANGSGKT) coordinates ATP.

This sequence belongs to the RecF family.

The protein localises to the cytoplasm. The RecF protein is involved in DNA metabolism; it is required for DNA replication and normal SOS inducibility. RecF binds preferentially to single-stranded, linear DNA. It also seems to bind ATP. The chain is DNA replication and repair protein RecF from Pseudomonas savastanoi pv. phaseolicola (strain 1448A / Race 6) (Pseudomonas syringae pv. phaseolicola (strain 1448A / Race 6)).